The following is a 96-amino-acid chain: Ribonuclease P protein component 1 (96 aa).

The protein belongs to the eukaryotic/archaeal RNase P protein component 1 family. As to quaternary structure, consists of a catalytic RNA component and at least 5 protein subunits.

It is found in the cytoplasm. It carries out the reaction Endonucleolytic cleavage of RNA, removing 5'-extranucleotides from tRNA precursor.. In terms of biological role, part of ribonuclease P, a protein complex that generates mature tRNA molecules by cleaving their 5'-ends. The chain is Ribonuclease P protein component 1 from Methanococcus maripaludis (strain DSM 14266 / JCM 13030 / NBRC 101832 / S2 / LL).